Reading from the N-terminus, the 66-residue chain is MLKSFKNFTLEDMKAKRLELKKEYLDLRFKSIVGHVENPLKKREIRRDIARLNTIICEYELGIRKV.

Belongs to the universal ribosomal protein uL29 family.

This is Large ribosomal subunit protein uL29 from Borrelia garinii subsp. bavariensis (strain ATCC BAA-2496 / DSM 23469 / PBi) (Borreliella bavariensis).